Here is a 102-residue protein sequence, read N- to C-terminus: NADH-quinone oxidoreductase subunit K 2 (102 aa).

The next 3 helical transmembrane spans lie at 4–24 (ITPVHYLALSAALLLIGTVGV), 30–50 (IVIILMSIELILNAVNINLIA), and 62–82 (IFAIFVITDAVAEAAVGLGIL).

Belongs to the complex I subunit 4L family. In terms of assembly, NDH-1 is composed of 14 different subunits. Subunits NuoA, H, J, K, L, M, N constitute the membrane sector of the complex.

It is found in the cell inner membrane. It catalyses the reaction a quinone + NADH + 5 H(+)(in) = a quinol + NAD(+) + 4 H(+)(out). Its function is as follows. NDH-1 shuttles electrons from NADH, via FMN and iron-sulfur (Fe-S) centers, to quinones in the respiratory chain. The immediate electron acceptor for the enzyme in this species is believed to be ubiquinone. Couples the redox reaction to proton translocation (for every two electrons transferred, four hydrogen ions are translocated across the cytoplasmic membrane), and thus conserves the redox energy in a proton gradient. This chain is NADH-quinone oxidoreductase subunit K 2, found in Solibacter usitatus (strain Ellin6076).